The following is a 238-amino-acid chain: Ribonuclease Rh (238 aa).

The signal sequence occupies residues 1–16; sequence MKAVLALATLIGSTLA. Intrachain disulfides connect cysteine 19–cysteine 36, cysteine 26–cysteine 69, cysteine 35–cysteine 136, cysteine 79–cysteine 128, and cysteine 198–cysteine 229. Catalysis depends on residues histidine 62, glutamate 121, and histidine 125.

It belongs to the RNase T2 family.

The catalysed reaction is a ribonucleotidyl-ribonucleotide-RNA + H2O = a 3'-end 3'-phospho-ribonucleotide-RNA + a 5'-end dephospho-ribonucleoside-RNA + H(+). Functionally, this is a base non-specific ribonuclease. The chain is Ribonuclease Rh from Rhizopus niveus.